Reading from the N-terminus, the 90-residue chain is Sec-independent protein translocase protein TatA (90 aa).

The helical transmembrane segment at 1 to 21 (MGISPWTLLIVLLIVLLVFGT) threads the bilayer. Basic and acidic residues-rich tracts occupy residues 42–59 (MKEGEEGAKEGEKSEPSK) and 70–90 (SGEGHTIEGERSEQPRDRHSS). Residues 42–90 (MKEGEEGAKEGEKSEPSKLEQPPEEEKESGEGHTIEGERSEQPRDRHSS) form a disordered region.

This sequence belongs to the TatA/E family. As to quaternary structure, the Tat system comprises two distinct complexes: a TatABC complex, containing multiple copies of TatA, TatB and TatC subunits, and a separate TatA complex, containing only TatA subunits. Substrates initially bind to the TatABC complex, which probably triggers association of the separate TatA complex to form the active translocon.

Its subcellular location is the cell inner membrane. Its function is as follows. Part of the twin-arginine translocation (Tat) system that transports large folded proteins containing a characteristic twin-arginine motif in their signal peptide across membranes. TatA could form the protein-conducting channel of the Tat system. The polypeptide is Sec-independent protein translocase protein TatA (Alkalilimnicola ehrlichii (strain ATCC BAA-1101 / DSM 17681 / MLHE-1)).